The chain runs to 134 residues: S-adenosylmethionine decarboxylase proenzyme (134 aa).

The active-site Schiff-base intermediate with substrate; via pyruvic acid is the serine 64. Serine 64 is modified (pyruvic acid (Ser); by autocatalysis). Histidine 69 functions as the Proton acceptor; for processing activity in the catalytic mechanism. The active-site Proton donor; for catalytic activity is cysteine 84.

The protein belongs to the prokaryotic AdoMetDC family. Type 1 subfamily. Heterotetramer of two alpha and two beta chains arranged as a dimer of alpha/beta heterodimers. Requires pyruvate as cofactor. In terms of processing, is synthesized initially as an inactive proenzyme. Formation of the active enzyme involves a self-maturation process in which the active site pyruvoyl group is generated from an internal serine residue via an autocatalytic post-translational modification. Two non-identical subunits are generated from the proenzyme in this reaction, and the pyruvate is formed at the N-terminus of the alpha chain, which is derived from the carboxyl end of the proenzyme. The post-translation cleavage follows an unusual pathway, termed non-hydrolytic serinolysis, in which the side chain hydroxyl group of the serine supplies its oxygen atom to form the C-terminus of the beta chain, while the remainder of the serine residue undergoes an oxidative deamination to produce ammonia and the pyruvoyl group blocking the N-terminus of the alpha chain.

It carries out the reaction S-adenosyl-L-methionine + H(+) = S-adenosyl 3-(methylsulfanyl)propylamine + CO2. It functions in the pathway amine and polyamine biosynthesis; S-adenosylmethioninamine biosynthesis; S-adenosylmethioninamine from S-adenosyl-L-methionine: step 1/1. Its function is as follows. Catalyzes the decarboxylation of S-adenosylmethionine to S-adenosylmethioninamine (dcAdoMet), the propylamine donor required for the synthesis of the polyamines spermine and spermidine from the diamine putrescine. The polypeptide is S-adenosylmethionine decarboxylase proenzyme (Hydrogenobaculum sp. (strain Y04AAS1)).